Reading from the N-terminus, the 511-residue chain is Coatomer subunit delta (511 aa).

Residues 168 to 177 (QARRDAERQG) are compositionally biased toward basic and acidic residues. The tract at residues 168 to 196 (QARRDAERQGKKAPGFGGFGSSTVSGGST) is disordered. Phosphoserine is present on Ser-223. An N6-acetyllysine mark is found at Lys-233 and Lys-241. Phosphoserine is present on Ser-244. The MHD domain maps to 271-511 (MESVHMKIEE…TFLVDKYEIL (241 aa)). 2 positions are modified to N6-acetyllysine: Lys-309 and Lys-351. Position 493 is a phosphoserine (Ser-493).

The protein belongs to the adaptor complexes medium subunit family. Delta-COP subfamily. As to quaternary structure, oligomeric complex that consists of at least the alpha, beta, beta', gamma, delta, epsilon and zeta subunits. In terms of tissue distribution, ubiquitously expressed.

Its subcellular location is the cytoplasm. The protein resides in the golgi apparatus membrane. The protein localises to the cytoplasmic vesicle. It is found in the COPI-coated vesicle membrane. Functionally, the coatomer is a cytosolic protein complex that binds to dilysine motifs and reversibly associates with Golgi non-clathrin-coated vesicles, which further mediate biosynthetic protein transport from the ER, via the Golgi up to the trans Golgi network. Coatomer complex is required for budding from Golgi membranes, and is essential for the retrograde Golgi-to-ER transport of dilysine-tagged proteins. In mammals, the coatomer can only be recruited by membranes associated to ADP-ribosylation factors (ARFs), which are small GTP-binding proteins; the complex also influences the Golgi structural integrity, as well as the processing, activity, and endocytic recycling of LDL receptors. The protein is Coatomer subunit delta (ARCN1) of Bos taurus (Bovine).